Reading from the N-terminus, the 259-residue chain is Sesquipedalian-2 (259 aa).

The PH domain maps to 17 to 121 (PADHTGFLRS…WVKALSRASF (105 aa)). A coiled-coil region spans residues 124–150 (MRLVVRELESQLQDARQSLALHRCASQ). The disordered stretch occupies residues 155 to 178 (SCSKSQAPDHRAPDPENGHFLPRD). Basic and acidic residues predominate over residues 161-178 (APDHRAPDPENGHFLPRD). The short motif at 223–235 (CFSTLHDWYGKEI) is the F&amp;H element.

Belongs to the sesquipedalian family. Forms homodimers and heterodimers with PHETA1. Interacts with OCRL and INPP5B.

It is found in the early endosome. Its subcellular location is the recycling endosome. It localises to the golgi apparatus. The protein resides in the trans-Golgi network. The protein localises to the cytoplasmic vesicle. It is found in the clathrin-coated vesicle. Its function is as follows. Plays a role in endocytic trafficking. Required for receptor recycling from endosomes, both to the trans-Golgi network and the plasma membrane. In Mus musculus (Mouse), this protein is Sesquipedalian-2.